We begin with the raw amino-acid sequence, 1196 residues long: Sorbin and SH3 domain-containing protein 2 (1196 aa).

Disordered stretches follow at residues 25–57 and 75–95; these read VQSS…ETLN and PNLQ…GNSG. Phosphoserine occurs at positions 27, 28, and 40. The span at 83–92 shows a compositional bias: polar residues; that stretch reads PTQSHITING. A phosphoserine mark is found at serine 130 and serine 143. At methionine 148 the chain carries Alanine amide. A SoHo domain is found at 166-227; sequence VIKAPHYPGI…YNTPYTYNAG (62 aa). Residues 235–247 are compositionally biased toward polar residues; the sequence is AQSHPAAKTQTYR. Disordered stretches follow at residues 235–314 and 329–407; these read AQSH…EPGK and SSID…GDDS. 2 stretches are compositionally biased toward basic and acidic residues: residues 252 to 262 and 276 to 312; these read SHSDNGTDAFK and RPRD…EYEP. Serine 254 is subject to Phosphoserine. Polar residues predominate over residues 329 to 343; sequence SSIDRSLERPSSSAS. 4 positions are modified to phosphoserine: serine 334, serine 340, serine 343, and serine 354. A Phosphothreonine modification is found at threonine 372. Serine 382 is modified (phosphoserine). The span at 382 to 399 shows a compositional bias: low complexity; sequence SSSTFTTSFISSSPSSPS. A Phosphothreonine modification is found at threonine 387. Phosphoserine occurs at positions 392, 393, 394, 396, 397, 399, 478, 589, 592, 645, 648, 844, and 938. Residues 929–958 form a disordered region; the sequence is QDHESPRSYSSTLTDLGRSVSRERRGTPEK. The span at 948-958 shows a compositional bias: basic and acidic residues; the sequence is VSRERRGTPEK. SH3 domains follow at residues 959–1018 and 1034–1095; these read EVKL…KLTP and GEIG…VVKR. Residues serine 1113 and serine 1119 each carry the phosphoserine modification. Positions 1137-1196 constitute an SH3 3 domain; the sequence is GGGEPFQALYNYTPRNEDELELRESDVVDVMEKCDDGWFVGTSRRTKFFGTFPGNYVKRL.

As to quaternary structure, interacts with ABL1/c-Abl, ABL2/v-Abl/Arg, ACTN, CBL and PALLD. Interacts with ABL, CBL, DNM1, DNM2, FLOT1, AFDN, PTK2B/PYK2, SAPAP, SPTAN1, SYNJ1, SYNJ2, VCL/vinculin and WASF. Interacts with PTPN12 and WASF1 via its SH3 domains; this interaction may mediate the partial PTPN12 and WASF1 translocation to focal adhesion sites. In terms of processing, ubiquitinated by CBL. As to expression, expressed in brain; found in synapses in cerebellum.

Its subcellular location is the cytoplasm. The protein localises to the perinuclear region. The protein resides in the apical cell membrane. It localises to the cell junction. It is found in the focal adhesion. Its subcellular location is the cell projection. The protein localises to the lamellipodium. Adapter protein that plays a role in the assembling of signaling complexes, being a link between ABL kinases and actin cytoskeleton. Can form complex with ABL1 and CBL, thus promoting ubiquitination and degradation of ABL1. May play a role in the regulation of pancreatic cell adhesion, possibly by acting on WASF1 phosphorylation, enhancing phosphorylation by ABL1, as well as dephosphorylation by PTPN12. Isoform 2 increases water and sodium absorption in the intestine and gall-bladder. The chain is Sorbin and SH3 domain-containing protein 2 (Sorbs2) from Rattus norvegicus (Rat).